A 67-amino-acid chain; its full sequence is Penaeidin-4d (67 aa).

A signal peptide spans 1-19; that stretch reads MRLLVCLVFLASFAMVCQG. Cystine bridges form between cysteine 42–cysteine 56, cysteine 45–cysteine 63, and cysteine 57–cysteine 64. Leucine 66 is modified (leucine amide).

It belongs to the penaeidin family.

Its subcellular location is the cytoplasmic granule. In terms of biological role, antibacterial and antifungal activity. Presents chitin-binding activity. The protein is Penaeidin-4d of Penaeus setiferus (Atlantic white shrimp).